A 317-amino-acid polypeptide reads, in one-letter code: Methyltransferase CPUR_05424 (317 aa).

Positions 57 to 149 are methyltransferase domain; the sequence is DVGAGNGPYA…QLRPGGTFAC (93 aa).

It belongs to the methyltransferase superfamily.

The protein operates within pigment biosynthesis. Functionally, methyltransferase; part of the ergochrome gene cluster responsible for the typical purple-black color of the ergot sclerotia. The ergochrome gene cluster produces several ergot pigments including the yellow ergochrome secalonic acid and its derivatives, as well as the red anthraquinones endocrocin and clavorubin. The pathway begins with the synthesis of atrochrysone thioester by the polyketide synthase (PKS) CPUR_05437. The atrochrysone carboxyl ACP thioesterase CPUR_05436 then breaks the thioester bond and releases the atrochrysone carboxylic acid from CPUR_05437. The atrochrysone carboxylic acid is then converted to atrochrysone which is further transformed into emodin anthrone. The next step is performed by the anthrone oxygenase CPUR_05434 that catalyzes the oxidation of emodinanthrone to emodin. Emodin is further modified to yield monodictyphenone via several steps involving CPUR_05427, CPUR_05428, CPUR_05429 and CPUR_05430. The short chain dehydrogenase/reductase CPUR_05418 then catalyzes the C-5 ketoreduction to give the xanthone skeleton of the monomeric units. Ergochromes formation requires further dimerization steps of different xanthone units, probably catalyzed by the cytochrome P450 monooxygenase CPUR_05419. CPUR_05425, CPUR_05426 and CPUR_05431 are unique to Claviceps, thus it is likely that they are involved in further modification of xanthone units or in their dimerization. The yellow ergochromes and the red anthraquinone pigments endocrocin and clavorubin are products from the same PKS derived precursors and the latter are likely shunt products in the pathway of xanthone biosynthesis. It is proposed that atrochrysone carboxylic acid released from the PKS CPUR_05437 can also be converted to endocrocin anthrone which is further oxidized into endocrocin by CPUR_05435. Endocrocin could be then modified to clavorubin, possibly by CPUR_05423 and CPUR_05431. Clavorubin is the principal anthraquinone metabolite produced by the cluster with a much higher yield compared to endocrocin. This chain is Methyltransferase CPUR_05424, found in Claviceps purpurea (strain 20.1) (Ergot fungus).